A 293-amino-acid polypeptide reads, in one-letter code: Xyloglucan endotransglucosylase/hydrolase protein 31 (293 aa).

Residues 1–20 (MALSLIFLALLVLCPSSGHS) form the signal peptide. The region spanning 29-230 (YPSSRVPTSP…YRYQPFVAKY (202 aa)) is the GH16 domain. The active-site Nucleophile is E114. E118 functions as the Proton donor in the catalytic mechanism. Residues E118, 131–133 (QTN), 141–148 (DRNVIGRE), and 209–210 (DW) contribute to the xyloglucan site. 2 disulfides stabilise this stretch: C238–C246 and C280–C293. Residue R285 participates in xyloglucan binding.

Belongs to the glycosyl hydrolase 16 family. XTH group 3 subfamily. As to quaternary structure, interacts with XTH17. The formation of an XTH17-XTH31 dimer may be required for XET activity. Post-translationally, contains at least one intrachain disulfide bond essential for its enzymatic activity. In terms of tissue distribution, predominantly expressed in root. Weakly expressed in influorescence stems. Expressed in root tips and elongation zones, stems, young leaves, flowers and siliques. Expressed in root, hypocotyl, and etiolated whole seedlings.

Its subcellular location is the secreted. The protein localises to the cell wall. The protein resides in the extracellular space. It localises to the apoplast. It is found in the cell membrane. It catalyses the reaction breaks a beta-(1-&gt;4) bond in the backbone of a xyloglucan and transfers the xyloglucanyl segment on to O-4 of the non-reducing terminal glucose residue of an acceptor, which can be a xyloglucan or an oligosaccharide of xyloglucan.. The enzyme catalyses xyloglucan + H2O = xyloglucan oligosaccharides.. Functionally, catalyzes xyloglucan endohydrolysis (XEH) and/or endotransglycosylation (XET). Cleaves and religates xyloglucan polymers, an essential constituent of the primary cell wall, and thereby participates in cell wall construction of growing tissues. Involved in the accumulation of hemicelluloses. Has a high XEH activity and only a slight XET activity in vitro, but the main in planta activity seems to be XET, thus controlling aluminum sensitivity. Acceptor preferences are XXXGol = XXFGol &gt; XXLGol &gt; XLLGol = XLFGol. The chain is Xyloglucan endotransglucosylase/hydrolase protein 31 from Arabidopsis thaliana (Mouse-ear cress).